Reading from the N-terminus, the 203-residue chain is MPSPSRKSRSRSRSRSKSPKRSPAKKARKTPKKPRAAGGVKKPSTLSMIVAAITAMKNRKGSSVQAIRKYILANNKGINTSHLGSAMKLAFAKGLKSGVLVRPKTSAGASGATGSFRVGKAPASPKKAKKAKSPKKKSSKNKSNNAKAKKSPRKKAAVKKSTKSKAKKPKSPKKKAAKKTARKSPKKKARKSPKKKAAKKSKK.

Basic residues predominate over residues 1–35; the sequence is MPSPSRKSRSRSRSRSKSPKRSPAKKARKTPKKPR. 2 disordered regions span residues 1–46 and 104–203; these read MPSP…PSTL and KTSA…KSKK. The H15 domain maps to 41-120; sequence KKPSTLSMIV…GATGSFRVGK (80 aa). Basic residues-rich tracts occupy residues 126–140 and 147–203; these read KKAK…KSSK and KAKK…KSKK.

Post-translationally, PL-II* and PL-IV are produced by post-translational cleavage of a common precursor. In terms of tissue distribution, sperm.

The protein localises to the nucleus. Its subcellular location is the chromosome. Its function is as follows. Linker histones are implicated in chromatin remodeling and/or transcriptional regulation during spermiogenesis, the process of spermatid maturation into spermatozoa. Protamines substitute for histones in the chromatin of sperm during the haploid phase of spermatogenesis. They compact sperm DNA into a highly condensed, stable and inactive complex. This Mytilus trossulus (Blue mussel) protein is Sperm-specific protein PHI-2B/PHI-3.